A 305-amino-acid chain; its full sequence is NAD kinase (305 aa).

D84 (proton acceptor) is an active-site residue. NAD(+) contacts are provided by residues 84-85 (DG), 159-160 (NE), H170, R187, D189, 200-205 (TAYSLS), and Q260.

Belongs to the NAD kinase family. The cofactor is a divalent metal cation.

It is found in the cytoplasm. The catalysed reaction is NAD(+) + ATP = ADP + NADP(+) + H(+). Involved in the regulation of the intracellular balance of NAD and NADP, and is a key enzyme in the biosynthesis of NADP. Catalyzes specifically the phosphorylation on 2'-hydroxyl of the adenosine moiety of NAD to yield NADP. The sequence is that of NAD kinase from Pasteurella multocida (strain Pm70).